The chain runs to 2677 residues: MSTCCWCTPGGASTIDFLKRYASNTPSGEFQTADEDLCYCLECVAEYHKARDELPFLHEVLWELETLRLINHFEKSMKAEIGDDDELYIVDNNGEMPLFDITGQDFENKLRVPLLEILKYPYLLLHERVNELCVEALCRMEQANCSFQVFDKHPGIYLFLVHPNEMVRRWAILTARNLGKVDRDDYYDLQEVLLCLFKVIELGLLESPDIYTSSVLEKGKLILLPSHMYDTTNYKSYWLGICMLLTILEEQAMDSLLLGSDKQNDFMQSILHTMEREADDDSVDPFWPALHCFMVILDRLGSKVWGQLMDPIVAFQTIINNASYNREIRHIRNSSVRTKLEPESYLDDMVTCSQIVYNYNPEKTKKDSGWRTAICPDYCPNMYEEMETLASVLQSDIGQDMRVHNSTFLWFIPFVQSLMDLKDLGVAYIAQVVNHLYSEVKEVLNQTDAVCDKVTEFFLLILVSVIELHRNKKCLHLLWVSSQQWVEAVVKCAKLPTTAFTRSSEKSSGNCSKGTAMISSLSLHSMPSNSVQLAYVQLIRSLLKEGYQLGQQSLCKRFWDKLNLFLRGNLSLGWQLTSQETHELQSCLKQIIRNIKFKAPPCNTFVDLTSACKISPASYNKEESEQMGKTSRKDMHCLEASSPTFSKEPMKVQDSVLIKADNTIEGDNNEQNYIKDVKLEDHLLAGSCLKQSSKNIFTERAEDQIKISTRKQKSVKEISSYTPKDCTSRNGPERGCDRGIIVSTRLLTDSSTDALEKVSTSNEDFSLKDDALAKTSKRKTKVQKDEICAKLSHVIKKQHRKSTLVDNTINLDENLTVSNIESFYSRKDTGVQKGDGFIHNLSLDPSGVLDDKNGEQKSQNNVLPKEKQLKNEELVIFSFHENNCKIQEFHVDGKELIPFTEMTNASEKKSSPFKDLMTVPESRDEEMSNSTSVIYSNLTREQAPDISPKSDTLTDSQIDRDLHKLSLLAQASVITFPSDSPQNSSQLQRKVKEDKRCFTANQNNVGDTSRGQVIIISDSDDDDDERILSLEKLTKQDKICLEREHPEQHVSTVNSKEEKNPVKEEKTETLFQFEESDSQCFEFESSSEVFSVWQDHPDDNNSVQDGEKKCLAPIANTTNGQGCTDYVSEVVKKGAEGIEEHTRPRSISVEEFCEIEVKKPKRKRSEKPMAEDPVRPSSSVRNEGQSDTNKRDLVGNDFKSIDRRTSTPNSRIQRATTVSQKKSSKLCTCTEPIRKVPVSKTPKKTHSDAKKGQNRSSNYLSCRTTPAIVPPKKFRQCPEPTSTAEKLGLKKGPRKAYELSQRSLDYVAQLRDHGKTVGVVDTRKKTKLISPQNLSVRNNKKLLTSQELQMQRQIRPKSQKNRRRLSDCESTDVKRAGSHTAQNSDIFVPESDRSDYNCTGGTEVLANSNRKQLIKCMPSEPETIKAKHGSPATDDACPLNQCDSVVLNGTVPTNEVIVSTSEDPLGGGDPTARHIEMAALKEGEPDSSSDAEEDNLFLTQNDPEDMDLCSQMENDNYKLIELIHGKDTVEVEEDSVSRPQLESLSGTKCKYKDCLETTKNQGEYCPKHSEVKAADEDVFRKPGLPPPASKPLRPTTKIFSSKSTSRIAGLSKSLETSSALSPSLKNKSKGIQSILKVPQPVPLIAQKPVGEMKNSCNVLHPQSPNNSNRQGCKVPFGESKYFPSSSPVNILLSSQSVSDTFVKEVLKWKYEMFLNFGQCGPPASLCQSISRPVPVRFHNYGDYFNVFFPLMVLNTFETVAQEWLNSPNRENFYQLQVRKFPADYIKYWEFAVYLEECELAKQLYPKENDLVFLAPERINEEKKDTERNDIQDLHEYHSGYVHKFRRTSVMRNGKTECYLSIQTQENFPANLNELVNCIVISSLVTTQRKLKAMSLLGSRNQLARAVLNPNPMDFCTKDLLTTTSERIIAYLRDFNEDQKKAIETAYAMVKHSPSVAKICLIHGPPGTGKSKTIVGLLYRLLTENQRKGHSDENSNAKIKQNRVLVCAPSNAAVDELMKKIILEFKEKCKDKKNPLGNCGDINLVRLGPEKSINSEVLKFSLDSQVNHRMKKELPSHVQAMHKRKEFLDYQLDELSRQRALCRGGREIQRQELDENISKVSKERQELASKIKEVQGRPQKTQSIIILESHIICCTLSTSGGLLLESAFRGQGGVPFSCVIVDEAGQSCEIETLTPLIHRCNKLILVGDPKQLPPTVISMKAQEYGYDQSMMARFCRLLEENVEHNMISRLPILQLTVQYRMHPDICLFPSNYVYNRNLKTNRQTEAIRCSSDWPFQPYLVFDVGDGSERRDNDSYINVQEIKLVMEIIKLIKDKRKDVSFRNIGIITHYKAQKTMIQKDLDKEFDRKGPAEVDTVDAFQGRQKDCVIVTCVRANSIQGSIGFLASLQRLNVTITRAKYSLFILGHLRTLMENQHWNQLIQDAQKRGAIIKTCDKNYRHDAVKILKLKPVLQRSLTHPPTIAPEGSRPQGGLPSSKLDSGFAKTSVAASLYHTPSDSKEITLTVTSKDPERPPVHDQLQDPRLLKRMGIEVKGGIFLWDPQPSSPQHPGATPPTGEPGFPVVHQDLSHIQQPAAVVAALSSHKPPVRGEPPAASPEASTCQSKCDDPEEELCHRREARAFSEGEQEKCGSETHHTRRNSRWDKRTLEQEDSSSKKRKLL.

K339 participates in a covalent cross-link: Glycyl lysine isopeptide (Lys-Gly) (interchain with G-Cter in SUMO1). S615, S642, and S878 each carry phosphoserine. A Glycyl lysine isopeptide (Lys-Gly) (interchain with G-Cter in SUMO2) cross-link involves residue K894. Residues S911, S947, S956, S1017, and S1019 each carry the phosphoserine modification. Residues K1056 and K1063 each participate in a glycyl lysine isopeptide (Lys-Gly) (interchain with G-Cter in SUMO2) cross-link. Disordered stretches follow at residues 1158–1219 (KKPK…TTVS) and 1237–1258 (PVSKTPKKTHSDAKKGQNRSSN). Residues 1176–1187 (PSSSVRNEGQSD) show a composition bias toward polar residues. Residues 1188–1205 (TNKRDLVGNDFKSIDRRT) are compositionally biased toward basic and acidic residues. A compositionally biased stretch (polar residues) spans 1206–1219 (STPNSRIQRATTVS). Phosphoserine is present on S1330. Residues K1340 and K1341 each participate in a glycyl lysine isopeptide (Lys-Gly) (interchain with G-Cter in SUMO2) cross-link. The interval 1351–1385 (QRQIRPKSQKNRRRLSDCESTDVKRAGSHTAQNSD) is disordered. Residues 1354–1363 (IRPKSQKNRR) show a composition bias toward basic residues. The span at 1364–1375 (RLSDCESTDVKR) shows a compositional bias: basic and acidic residues. At S1366 the chain carries Phosphoserine. K1415 participates in a covalent cross-link: Glycyl lysine isopeptide (Lys-Gly) (interchain with G-Cter in SUMO2). A Phosphoserine modification is found at S1489. Positions 1579 to 1604 (FRKPGLPPPASKPLRPTTKIFSSKST) are disordered. A phosphoserine mark is found at S1621, S1623, and S1663. 1963-1970 (GPPGTGKS) provides a ligand contact to ATP. Positions 2070–2087 (KKELPSHVQAMHKRKEFL) match the Bipartite nuclear localization signal motif. A coiled-coil region spans residues 2105–2136 (REIQRQELDENISKVSKERQELASKIKEVQGR). At T2474 the chain carries Phosphothreonine. 3 disordered regions span residues 2474–2496 (THPPTIAPEGSRPQGGLPSSKLD), 2556–2577 (WDPQPSSPQHPGATPPTGEPGF), and 2597–2677 (LSSH…RKLL). Positions 2560–2573 (PSSPQHPGATPPTG) are enriched in pro residues. Positions 2628–2671 (ELCHRREARAFSEGEQEKCGSETHHTRRNSRWDKRTLEQEDSSS) are enriched in basic and acidic residues. The segment at 2661–2677 (KRTLEQEDSSSKKRKLL) is necessary for nuclear localization.

This sequence belongs to the DNA2/NAM7 helicase family. Homodimer. Interacts with PER2; the interaction inhibits termination of circadian target genes. Interacts with CHD4, POLR2A, PRKDC and TRIM28. Interacts with UBE2I. Interacts (via N-terminus domain) with EXOSC9 (via C-terminus region); the interaction enhances SETX sumoylation. Interacts with NCL (via N-terminus domain). Interacts with PABPN1, PABPC1 and SF3B1. Interacts with SMN1/SMN2 and POLR2A; SMN1/SMN2 recruits SETX to POLR2A. Ubiquitinated. In terms of processing, sumoylated preferentially with SUMO2 or SUMO3. As to expression, highly expressed in skeletal muscle. Expressed in heart, fibroblast, placenta and liver. Weakly expressed in brain and lung. Expressed in the cortex of the kidney (highly expressed in tubular epithelial cells but low expression in the glomerulus).

It is found in the nucleus. The protein localises to the nucleoplasm. The protein resides in the nucleolus. It localises to the cytoplasm. Its subcellular location is the chromosome. It is found in the telomere. The protein localises to the cell projection. The protein resides in the axon. It localises to the growth cone. Functionally, probable RNA/DNA helicase involved in diverse aspects of RNA metabolism and genomic integrity. Plays a role in transcription regulation by its ability to modulate RNA Polymerase II (Pol II) binding to chromatin and through its interaction with proteins involved in transcription. Contributes to the mRNA splicing efficiency and splice site selection. Required for the resolution of R-loop RNA-DNA hybrid formation at G-rich pause sites located downstream of the poly(A) site, allowing XRN2 recruitment and XRN2-mediated degradation of the downstream cleaved RNA and hence efficient RNA polymerase II (RNAp II) transcription termination. Required for the 3' transcriptional termination of PER1 and CRY2, thus playing an important role in the circadian rhythm regulation. Involved in DNA double-strand breaks damage response generated by oxidative stress. In association with RRP45, targets the RNA exosome complex to sites of transcription-induced DNA damage. Plays a role in the development and maturation of germ cells: essential for male meiosis, acting at the interface of transcription and meiotic recombination, and in the process of gene silencing during meiotic sex chromosome inactivation (MSCI). May be involved in telomeric stability through the regulation of telomere repeat-containing RNA (TERRA) transcription. Plays a role in neurite outgrowth in hippocampal cells through FGF8-activated signaling pathways. Inhibits retinoic acid-induced apoptosis. This is Probable helicase senataxin from Homo sapiens (Human).